Consider the following 316-residue polypeptide: Apolipoprotein E (316 aa).

The first 18 residues, 1–18, serve as a signal peptide directing secretion; sequence MKVLWVALVVALLAGCQA. Tandem repeats lie at residues 79–100, 101–122, 123–144, 145–166, 167–188, 189–210, 211–232, and 233–254. Positions 79-254 are 8 X 22 AA approximate tandem repeats; the sequence is VLMEETMKEV…RLDKMRQQLE (176 aa). Methionine sulfoxide is present on M142. S146 carries the post-translational modification Phosphoserine. Positions 157 to 167 are LDL and other lipoprotein receptors binding; it reads HLRKLRKRLLR. A heparin-binding site is contributed by 161–164; it reads LRKR. Residues 209-289 form a lipid-binding and lipoprotein association region; that stretch reads AATLSTQVGQ…SWFEPLVEDM (81 aa). The O-linked (GalNAc...) threonine glycan is linked to T211. 228–235 contributes to the heparin binding site; sequence RQKLHGRL. Positions 265-316 are homooligomerization; the sequence is SQIRLQAEAFQARLRSWFEPLVEDMQRQWAGLVEKVQLALHLSPTSPPSENH. The interval 277-289 is specificity for association with VLDL; it reads RLRSWFEPLVEDM.

It belongs to the apolipoprotein A1/A4/E family. In terms of assembly, homotetramer. May interact with ABCA1; functionally associated with ABCA1 in the biogenesis of HDLs. May interact with APP/A4 amyloid-beta peptide; the interaction is extremely stable in vitro but its physiological significance is unclear. May interact with MAPT. May interact with MAP2. In the cerebrospinal fluid, interacts with secreted SORL1. Interacts with PMEL; this allows the loading of PMEL luminal fragment on ILVs to induce fibril nucleation. Post-translationally, APOE exists as multiple glycosylated and sialylated glycoforms within cells and in plasma. The extent of glycosylation and sialylation are tissue and context specific. Glycated in plasma VLDL. In terms of processing, phosphorylated by FAM20C in the extracellular medium.

It localises to the secreted. It is found in the extracellular space. Its subcellular location is the extracellular matrix. The protein resides in the extracellular vesicle. The protein localises to the endosome. It localises to the multivesicular body. APOE is an apolipoprotein, a protein associating with lipid particles, that mainly functions in lipoprotein-mediated lipid transport between organs via the plasma and interstitial fluids. APOE is a core component of plasma lipoproteins and is involved in their production, conversion and clearance. Apolipoproteins are amphipathic molecules that interact both with lipids of the lipoprotein particle core and the aqueous environment of the plasma. As such, APOE associates with chylomicrons, chylomicron remnants, very low density lipoproteins (VLDL) and intermediate density lipoproteins (IDL) but shows a preferential binding to high-density lipoproteins (HDL). It also binds a wide range of cellular receptors including the LDL receptor/LDLR and the very low-density lipoprotein receptor/VLDLR that mediate the cellular uptake of the APOE-containing lipoprotein particles. Finally, APOE also has a heparin-binding activity and binds heparan-sulfate proteoglycans on the surface of cells, a property that supports the capture and the receptor-mediated uptake of APOE-containing lipoproteins by cells. The sequence is that of Apolipoprotein E (APOE) from Ovis aries musimon (Mouflon).